The chain runs to 363 residues: Ribonuclease P protein subunit p40 (363 aa).

Component of nuclear RNase P and RNase MRP ribonucleoproteins. RNase P consists of a catalytic RNA moiety and about 10 protein subunits; POP1, POP4, POP5, POP7, RPP14, RPP21, RPP25, RPP30, RPP38 and RPP40. Within the RNase P complex, POP1, POP7 and RPP25 form the 'finger' subcomplex, POP5, RPP14, RPP40 and homodimeric RPP30 form the 'palm' subcomplex, and RPP21, POP4 and RPP38 form the 'wrist' subcomplex. All subunits of the RNase P complex interact with the catalytic RNA. Several subunits of RNase P are also part of the RNase MRP complex. RNase MRP consists of a catalytic RNA moiety and about 8 protein subunits; POP1, POP7, RPP25, RPP30, RPP38, RPP40 and possibly also POP4 and POP5.

The protein localises to the nucleus. The protein resides in the nucleolus. Functionally, component of ribonuclease P, a ribonucleoprotein complex that generates mature tRNA molecules by cleaving their 5'-ends. Also a component of the MRP ribonuclease complex, which cleaves pre-rRNA sequences. This Homo sapiens (Human) protein is Ribonuclease P protein subunit p40 (RPP40).